An 81-amino-acid chain; its full sequence is Cortexin-2 (81 aa).

The helical transmembrane segment at threonine 29–phenylalanine 49 threads the bilayer.

The protein belongs to the cortexin family.

It is found in the membrane. The protein is Cortexin-2 (CTXN2) of Homo sapiens (Human).